The following is a 272-amino-acid chain: MDSLVESGWKYLVTHFSDFQLACIGSFILHESVFFLSGLPYIFLERTGFLSNYKIQTKSNTPEAQGKCIARLLLYHCCVNLPLMMASYPVFRFMGMESSFPLPSWKVVSAQILFYFIIEDFVFYWGHRILHTKWLYKNVHSVHHEYATPFGLTSEYAHPAEILFLGFATIVGPALTGPHLITLWLWMMLRVIETVEAHCGYHFPWSPSNFLPLYGGSLILMWESFAYSADFHDYHHRLLYTKSGNYSSTFVYMDWIFGTDKGYRKLKALKET.

Helical transmembrane passes span 24–44 (IGSF…YIFL), 72–94 (LLLY…FRFM), and 107–127 (VVSA…YWGH). One can recognise a Fatty acid hydroxylase domain in the interval 113–259 (LFYFIIEDFV…FVYMDWIFGT (147 aa)). Residues 127–131 (HRILH) carry the Histidine box-1 motif. Residues 140 to 144 (HSVHH) carry the Histidine box-2 motif. Helical transmembrane passes span 162 to 182 (ILFL…HLIT) and 209 to 229 (NFLP…AYSA). Residues 231-237 (FHDYHHR) carry the Histidine box-3 motif.

Belongs to the sterol desaturase family. Fe cation is required as a cofactor. In terms of tissue distribution, strongly expressed in leaves, flowers, siliques and developing seeds.

The protein resides in the endoplasmic reticulum membrane. It catalyses the reaction 4,4-dimethyl-5alpha-cholest-7-en-3beta-ol + 6 Fe(II)-[cytochrome b5] + 3 O2 + 5 H(+) = 4alpha-carboxy-4beta-methyl-5alpha-cholest-7-ene-3beta-ol + 6 Fe(III)-[cytochrome b5] + 4 H2O. It carries out the reaction 24-methylidenelophenol + 6 Fe(II)-[cytochrome b5] + 3 O2 + 5 H(+) = 4alpha-carboxy-ergosta-7,24(24(1))-dien-3beta-ol + 6 Fe(III)-[cytochrome b5] + 4 H2O. In terms of biological role, non-heme iron oxygenase involved in sterols biosynthesis by catalyzing the removal of the second methyl group at the C-4 position. 24-ethylidenelophenol and 24-ethyllophenol are the preferred substrates. Together with SMO2-2, required during embryogenesis, probably by maintaining sterols and auxin homeostasis. The polypeptide is Methylsterol monooxygenase 2-1 (Arabidopsis thaliana (Mouse-ear cress)).